The primary structure comprises 478 residues: Glycogen synthase (478 aa).

Lys15 serves as a coordination point for ADP-alpha-D-glucose.

Belongs to the glycosyltransferase 1 family. Bacterial/plant glycogen synthase subfamily.

The enzyme catalyses [(1-&gt;4)-alpha-D-glucosyl](n) + ADP-alpha-D-glucose = [(1-&gt;4)-alpha-D-glucosyl](n+1) + ADP + H(+). Its pathway is glycan biosynthesis; glycogen biosynthesis. Synthesizes alpha-1,4-glucan chains using ADP-glucose. This Caldicellulosiruptor bescii (strain ATCC BAA-1888 / DSM 6725 / KCTC 15123 / Z-1320) (Anaerocellum thermophilum) protein is Glycogen synthase.